The chain runs to 160 residues: MKSLQKGFTLIELMIVVAIIGILAAFAIPAYNDYIARTQVSEGVSLADGLKIRIADNLQDGDCTTKGDASTGEVGNEDKGKYALATIEGTPAANLSELKAEEKNGCLVKIEYGKGTSGGSVSALINNTELVLAQLANGSYVKESATVKDKFLPKALKETK.

A propeptide spans 1–7 (MKSLQKG) (leader sequence). An N-methylphenylalanine modification is found at Phe8. The helical transmembrane segment at 8 to 28 (FTLIELMIVVAIIGILAAFAI) threads the bilayer. Residues Cys63 and Cys106 are joined by a disulfide bond.

Belongs to the N-Me-Phe pilin family. As to quaternary structure, the pili are polar flexible filaments of about 5.4 nanometers diameter and 2.5 micrometers average length; they consist of only a single polypeptide chain arranged in a helical configuration of five subunits per turn in the assembled pilus.

The protein localises to the fimbrium. It localises to the membrane. Major component of the type IV fimbriae that plays an essential role in twitching motility, natural transformation, and protease secretion. The polypeptide is Type IV major fimbrial protein FimA (fimA) (Dichelobacter nodosus (Bacteroides nodosus)).